We begin with the raw amino-acid sequence, 302 residues long: Ornithine carbamoyltransferase (302 aa).

Carbamoyl phosphate-binding positions include 52 to 55, Gln79, Arg103, and 130 to 133; these read STRT and HPCQ. L-ornithine-binding positions include Asn161, Asp221, and 225–226; that span reads SM. Residues 261–262 and Arg289 contribute to the carbamoyl phosphate site; that span reads CL.

Belongs to the aspartate/ornithine carbamoyltransferase superfamily. OTCase family.

Its subcellular location is the cytoplasm. The enzyme catalyses carbamoyl phosphate + L-ornithine = L-citrulline + phosphate + H(+). It functions in the pathway amino-acid biosynthesis; L-arginine biosynthesis; L-arginine from L-ornithine and carbamoyl phosphate: step 1/3. Its function is as follows. Reversibly catalyzes the transfer of the carbamoyl group from carbamoyl phosphate (CP) to the N(epsilon) atom of ornithine (ORN) to produce L-citrulline. This Methanospirillum hungatei JF-1 (strain ATCC 27890 / DSM 864 / NBRC 100397 / JF-1) protein is Ornithine carbamoyltransferase.